A 374-amino-acid chain; its full sequence is Arrestin domain-containing protein 15 (374 aa).

Residues 344–374 are disordered; that stretch reads HHLNRSKAKVSKTEQQQRKTRNIVEENPYFR.

It belongs to the arrestin family.

This chain is Arrestin domain-containing protein 15 (arrd-15), found in Caenorhabditis elegans.